Consider the following 453-residue polypeptide: tRNA modification GTPase MnmE (453 aa).

The (6S)-5-formyl-5,6,7,8-tetrahydrofolate site is built by arginine 22, glutamate 79, and lysine 119. Residues 215 to 376 enclose the TrmE-type G domain; sequence GMKVVIAGRP…LREHLKACMG (162 aa). Asparagine 225 contacts K(+). GTP-binding positions include 225–230, 244–250, 269–272, and 334–337; these read NAGKSS, TEIAGTT, DTAG, and NKAD. Serine 229 provides a ligand contact to Mg(2+). Residues threonine 244, isoleucine 246, and threonine 249 each contribute to the K(+) site. Threonine 250 serves as a coordination point for Mg(2+). Residue lysine 453 coordinates (6S)-5-formyl-5,6,7,8-tetrahydrofolate.

Belongs to the TRAFAC class TrmE-Era-EngA-EngB-Septin-like GTPase superfamily. TrmE GTPase family. As to quaternary structure, homodimer. Heterotetramer of two MnmE and two MnmG subunits. The cofactor is K(+).

Its subcellular location is the cytoplasm. Its function is as follows. Exhibits a very high intrinsic GTPase hydrolysis rate. Involved in the addition of a carboxymethylaminomethyl (cmnm) group at the wobble position (U34) of certain tRNAs, forming tRNA-cmnm(5)s(2)U34. This is tRNA modification GTPase MnmE from Aeromonas salmonicida (strain A449).